We begin with the raw amino-acid sequence, 1262 residues long: DNA-directed RNA polymerase subunit beta' (1262 aa).

4 residues coordinate Zn(2+): cysteine 220, cysteine 294, cysteine 301, and cysteine 304.

The protein belongs to the RNA polymerase beta' chain family. RpoC2 subfamily. In terms of assembly, in cyanobacteria the RNAP catalytic core is composed of 2 alpha, 1 beta, 1 beta', 1 gamma and 1 omega subunit. When a sigma factor is associated with the core the holoenzyme is formed, which can initiate transcription. Requires Zn(2+) as cofactor.

It carries out the reaction RNA(n) + a ribonucleoside 5'-triphosphate = RNA(n+1) + diphosphate. Functionally, DNA-dependent RNA polymerase catalyzes the transcription of DNA into RNA using the four ribonucleoside triphosphates as substrates. The polypeptide is DNA-directed RNA polymerase subunit beta' (Gloeobacter violaceus (strain ATCC 29082 / PCC 7421)).